Here is a 332-residue protein sequence, read N- to C-terminus: Nuclear migration protein nudC (332 aa).

The interval 122–161 (RQQLLDSAGGEPSASNRDGISKPIEKVDDESDKSELGKLM) is disordered. One can recognise a CS domain in the interval 168–259 (CTLENYTWTQ…NKMNWWSRLV (92 aa)).

It belongs to the nudC family. As to quaternary structure, interacts with PCID2.

It localises to the cytoplasm. Chaperone protein with functions in nuclear localization and cytoplasmic mRNA trafficking. In postmitotic neurons, acts with nudE downstream of dar1 to ensure correct positioning of the nuclei in primary dendrites and as a consequence, is required for determining multipolar neuron morphology. Stabilizes PCID2 in the cytoplasm and thereby is required for promoting cytoplasmic mRNA trafficking. In Drosophila melanogaster (Fruit fly), this protein is Nuclear migration protein nudC.